A 1590-amino-acid polypeptide reads, in one-letter code: Pentafunctional AROM polypeptide (1590 aa).

Residues 1 to 387 (MGSTTFENPT…YEPKASVVED (387 aa)) are 3-dehydroquinate synthase. NAD(+) is bound by residues 49 to 51 (DTN), 86 to 89 (ENSK), 117 to 119 (GGV), and D122. Residue R133 coordinates 7-phospho-2-dehydro-3-deoxy-D-arabino-heptonate. Residue 142–143 (TT) coordinates NAD(+). 7-phospho-2-dehydro-3-deoxy-D-arabino-heptonate is bound by residues D149 and K155. Residue K164 participates in NAD(+) binding. A 7-phospho-2-dehydro-3-deoxy-D-arabino-heptonate-binding site is contributed by N165. Residues 182-185 (FLET) and N193 each bind NAD(+). E197 serves as a coordination point for Zn(2+). Residues 197–200 (EVVK) and K253 each bind 7-phospho-2-dehydro-3-deoxy-D-arabino-heptonate. E263 acts as the Proton acceptor; for 3-dehydroquinate synthase activity in catalysis. Residues 267 to 271 (RNILN) and H274 contribute to the 7-phospho-2-dehydro-3-deoxy-D-arabino-heptonate site. H274 lines the Zn(2+) pocket. H278 serves as the catalytic Proton acceptor; for 3-dehydroquinate synthase activity. 2 residues coordinate 7-phospho-2-dehydro-3-deoxy-D-arabino-heptonate: H290 and K359. H290 contributes to the Zn(2+) binding site. The tract at residues 400–841 (VRPSVPETLN…WDILSKSFQV (442 aa)) is EPSP synthase. C823 functions as the For EPSP synthase activity in the catalytic mechanism. Residues 863 to 1055 (DKSIFIIGMR…RNKPQSFFVS (193 aa)) are shikimate kinase. 870 to 877 (GMRGAGKT) contacts ATP. Positions 1056 to 1276 (LTMPDISGAA…AAPGQLSAAE (221 aa)) are 3-dehydroquinase. The active-site Proton acceptor; for 3-dehydroquinate dehydratase activity is H1179. Residue K1207 is the Schiff-base intermediate with substrate; for 3-dehydroquinate dehydratase activity of the active site. The segment at 1289–1590 (PKSFYLFGTP…KMDKHPTFVC (302 aa)) is shikimate dehydrogenase.

It in the N-terminal section; belongs to the sugar phosphate cyclases superfamily. Dehydroquinate synthase family. The protein in the 2nd section; belongs to the EPSP synthase family. This sequence in the 3rd section; belongs to the shikimate kinase family. In the 4th section; belongs to the type-I 3-dehydroquinase family. It in the C-terminal section; belongs to the shikimate dehydrogenase family. Homodimer. The cofactor is Zn(2+).

It is found in the cytoplasm. The catalysed reaction is 7-phospho-2-dehydro-3-deoxy-D-arabino-heptonate = 3-dehydroquinate + phosphate. It catalyses the reaction 3-dehydroquinate = 3-dehydroshikimate + H2O. It carries out the reaction shikimate + NADP(+) = 3-dehydroshikimate + NADPH + H(+). The enzyme catalyses shikimate + ATP = 3-phosphoshikimate + ADP + H(+). The catalysed reaction is 3-phosphoshikimate + phosphoenolpyruvate = 5-O-(1-carboxyvinyl)-3-phosphoshikimate + phosphate. It functions in the pathway metabolic intermediate biosynthesis; chorismate biosynthesis; chorismate from D-erythrose 4-phosphate and phosphoenolpyruvate: step 2/7. Its pathway is metabolic intermediate biosynthesis; chorismate biosynthesis; chorismate from D-erythrose 4-phosphate and phosphoenolpyruvate: step 3/7. It participates in metabolic intermediate biosynthesis; chorismate biosynthesis; chorismate from D-erythrose 4-phosphate and phosphoenolpyruvate: step 4/7. The protein operates within metabolic intermediate biosynthesis; chorismate biosynthesis; chorismate from D-erythrose 4-phosphate and phosphoenolpyruvate: step 5/7. It functions in the pathway metabolic intermediate biosynthesis; chorismate biosynthesis; chorismate from D-erythrose 4-phosphate and phosphoenolpyruvate: step 6/7. Functionally, the AROM polypeptide catalyzes 5 consecutive enzymatic reactions in prechorismate polyaromatic amino acid biosynthesis. The sequence is that of Pentafunctional AROM polypeptide from Sclerotinia sclerotiorum (White mold).